The chain runs to 317 residues: Acetyl-coenzyme A carboxylase carboxyl transferase subunit alpha (317 aa).

Residues 40–293 form the CoA carboxyltransferase C-terminal domain; that stretch reads LEGRVRDAMM…GTVIADALKE (254 aa).

It belongs to the AccA family. Acetyl-CoA carboxylase is a heterohexamer composed of biotin carboxyl carrier protein (AccB), biotin carboxylase (AccC) and two subunits each of ACCase subunit alpha (AccA) and ACCase subunit beta (AccD).

It is found in the cytoplasm. The catalysed reaction is N(6)-carboxybiotinyl-L-lysyl-[protein] + acetyl-CoA = N(6)-biotinyl-L-lysyl-[protein] + malonyl-CoA. It participates in lipid metabolism; malonyl-CoA biosynthesis; malonyl-CoA from acetyl-CoA: step 1/1. Component of the acetyl coenzyme A carboxylase (ACC) complex. First, biotin carboxylase catalyzes the carboxylation of biotin on its carrier protein (BCCP) and then the CO(2) group is transferred by the carboxyltransferase to acetyl-CoA to form malonyl-CoA. The chain is Acetyl-coenzyme A carboxylase carboxyl transferase subunit alpha from Sinorhizobium fredii (strain NBRC 101917 / NGR234).